The chain runs to 652 residues: DNA ligase (652 aa).

NAD(+)-binding positions include 29-33, 78-79, and Glu-107; these read DSEYD and SL. Lys-109 (N6-AMP-lysine intermediate) is an active-site residue. Arg-130, Glu-164, Lys-278, and Lys-302 together coordinate NAD(+). Residues Cys-395, Cys-398, Cys-413, and Cys-418 each coordinate Zn(2+). Residues 577 to 652 form the BRCT domain; that stretch reads VADAALSGLT…VRDEAWLESL (76 aa).

Belongs to the NAD-dependent DNA ligase family. LigA subfamily. Mg(2+) is required as a cofactor. Mn(2+) serves as cofactor.

The enzyme catalyses NAD(+) + (deoxyribonucleotide)n-3'-hydroxyl + 5'-phospho-(deoxyribonucleotide)m = (deoxyribonucleotide)n+m + AMP + beta-nicotinamide D-nucleotide.. Functionally, DNA ligase that catalyzes the formation of phosphodiester linkages between 5'-phosphoryl and 3'-hydroxyl groups in double-stranded DNA using NAD as a coenzyme and as the energy source for the reaction. It is essential for DNA replication and repair of damaged DNA. The sequence is that of DNA ligase from Streptococcus pneumoniae (strain Taiwan19F-14).